Consider the following 1777-residue polypeptide: Fatty acid synthase subunit alpha (1777 aa).

The interval 101–124 (APVESADNEPAQPAASSTPAAPAP) is disordered. Residues 110–120 (PAQPAASSTPA) are compositionally biased toward low complexity. One can recognise a Carrier domain in the interval 151–237 (LSAIDVVISI…KVMGGHIDRL (87 aa)). O-(pantetheine 4'-phosphoryl)serine is present on Ser-186. The ketoreductase (KR) domain stretch occupies residues 563–803 (FTGRRVLVTG…ILSLLSGDIL (241 aa)). Residues 1007 to 1539 (KEIMHEVVID…QKGGLVVGIA (533 aa)) form the Ketosynthase family 3 (KS3) domain. Active-site for beta-ketoacyl synthase activity residues include Cys-1193, His-1424, and His-1465. Asp-1661 lines the Mg(2+) pocket. Residues 1661–1663 (DIE), 1706–1716 (EAIFKSLQIPS), 1730–1734 (SNGAQ), and 1760–1762 (ITH) each bind acetyl-CoA.

It belongs to the thiolase-like superfamily. Fungal fatty acid synthetase subunit alpha family. Fatty acid synthase is composed of alpha and beta subunits.

It carries out the reaction acetyl-CoA + n malonyl-CoA + 2n NADPH + 4n H(+) = a long-chain-acyl-CoA + n CoA + n CO2 + 2n NADP(+).. It catalyses the reaction a fatty acyl-[ACP] + malonyl-[ACP] + H(+) = a 3-oxoacyl-[ACP] + holo-[ACP] + CO2. The catalysed reaction is a (3R)-hydroxyacyl-[ACP] + NADP(+) = a 3-oxoacyl-[ACP] + NADPH + H(+). It functions in the pathway secondary metabolite biosynthesis. Functionally, fatty acid synthase alpha subunit; part of the gene cluster that mediates the biosynthesis of oryzines, natural products with an unusual maleidride backbone. The two subunits of the fungal fatty acid synthase oryfasA and oryfasB probably form octenoic acid. This fatty acid is most likely activated by the acyl-CoA ligase oryP to give octenyl-CoA before the citrate synthase-like protein oryE catalyzes condensation with oxaloacetate to form tricarboxylic acid. The next steps of the pathways are conjectural, but a favorite possible route has been proposed, beginning with decarboxylation and concomitant dehydration by the decarboxylase oryM, followed by tautomerization, which may lead to the production of a diene intermediate. Reduction of this diene intermediate could give the known metabolite piliformic acid. On the pathway to oryzine B and oryzine A, however, hydroxylation of the diene by the alpha-ketoglutarate-dependent dioxygenase oryG and lactonisation by the lactonohydrolases oryH or oryL could give oryzine B directly. Finally, enoyl reduction by the dehydrogenase oryD would then convert oryzine B into oryzine A. In Aspergillus oryzae (strain ATCC 42149 / RIB 40) (Yellow koji mold), this protein is Fatty acid synthase subunit alpha.